The primary structure comprises 185 residues: Jasmonate-induced protein homolog (185 aa).

This sequence belongs to the jasmonate-induced protein family.

The polypeptide is Jasmonate-induced protein homolog (Atriplex canescens (Fourwing saltbush)).